The following is a 453-amino-acid chain: Homogentisate 1,2-dioxygenase (453 aa).

H306 (proton acceptor) is an active-site residue. Fe cation-binding residues include H349 and E355. The homogentisate site is built by Y364 and H385. A Fe cation-binding site is contributed by H385.

It belongs to the homogentisate dioxygenase family. Hexamer; dimer of trimers. The cofactor is Fe cation.

The enzyme catalyses homogentisate + O2 = 4-maleylacetoacetate + H(+). The protein operates within amino-acid degradation; L-phenylalanine degradation; acetoacetate and fumarate from L-phenylalanine: step 4/6. Functionally, involved in the catabolism of homogentisate (2,5-dihydroxyphenylacetate or 2,5-OH-PhAc), a central intermediate in the degradation of phenylalanine and tyrosine. Catalyzes the oxidative ring cleavage of the aromatic ring of homogentisate to yield maleylacetoacetate. This is Homogentisate 1,2-dioxygenase from Rhizobium leguminosarum bv. trifolii (strain WSM2304).